The following is a 211-amino-acid chain: Thymidylate kinase (211 aa).

10–17 (GGDGVGKS) lines the ATP pocket.

It belongs to the thymidylate kinase family.

The enzyme catalyses dTMP + ATP = dTDP + ADP. In terms of biological role, phosphorylation of dTMP to form dTDP in both de novo and salvage pathways of dTTP synthesis. The sequence is that of Thymidylate kinase from Clavibacter michiganensis subsp. michiganensis (strain NCPPB 382).